We begin with the raw amino-acid sequence, 124 residues long: Outer dense fiber protein 2 (124 aa).

Positions 13–124 (KEDSERLMEQ…EAIMEQLKEL (112 aa)) form a coiled coil.

The protein belongs to the ODF2 family. As to quaternary structure, self-associates. Associates with microtubules and forms a fibrillar structure partially linked to the microtubule network. Interacts through its C-terminus with PLK1. Interacts with ODF1. Interacts with MARK4; the interaction is required for localization of ODF2 to centrioles. Interacts with TSSK4. Interacts with AKNA. Interacts with QRICH2. Interacts with CFAP58. Interacts with BBOF1. Interacts with CCDC38. Interacts with CCDC42. Tyrosine phosphorylated. As to expression, detected in sperm flagella (at protein level).

It is found in the cytoplasm. Its subcellular location is the cytoskeleton. The protein localises to the microtubule organizing center. The protein resides in the centrosome. It localises to the cell projection. It is found in the cilium. Its subcellular location is the centriole. The protein localises to the spindle pole. The protein resides in the flagellum. Functionally, seems to be a major component of sperm tail outer dense fibers (ODF). ODFs are filamentous structures located on the outside of the axoneme in the midpiece and principal piece of the mammalian sperm tail and may help to maintain the passive elastic structures and elastic recoil of the sperm tail. May have a modulating influence on sperm motility. Functions as a general scaffold protein that is specifically localized at the distal/subdistal appendages of mother centrioles. Component of the centrosome matrix required for the localization of PLK1 and NIN to the centrosomes. Required for the formation and/or maintenance of normal CETN1 assembly. This is Outer dense fiber protein 2 from Mesocricetus auratus (Golden hamster).